We begin with the raw amino-acid sequence, 338 residues long: uncharacterized protein (338 aa).

6 helical membrane passes run 13-33, 71-91, 110-130, 176-196, 218-238, and 301-321; these read PAYSHVLIAGGIGGATADFLM, GLYSGVCPMLIGSLPATALFF, TLCFLLAGFVGDLFASVVYVP, YGYRATILRDIPFSGFQLLFY, LITGSLAGAGAGFLTTPLDVA, and FRGFGPRIFWTSSQSSLMFVF. Solcar repeat units lie at residues 13–100, 108–202, and 216–328; these read PAYS…TKRH, PETL…LRQV, and RELI…IIRL.

It belongs to the mitochondrial carrier (TC 2.A.29) family.

Its subcellular location is the mitochondrion inner membrane. Functionally, mitochondrial solute carriers shuttle metabolites, nucleotides, and cofactors through the mitochondrial inner membrane. This is an uncharacterized protein from Schizosaccharomyces pombe (strain 972 / ATCC 24843) (Fission yeast).